Reading from the N-terminus, the 342-residue chain is Methylthioribose-1-phosphate isomerase (342 aa).

Substrate-binding positions include 49–51, arginine 86, and glutamine 187; that span reads RGA. Aspartate 228 serves as the catalytic Proton donor. Residue 238–239 coordinates substrate; it reads NK.

The protein belongs to the eIF-2B alpha/beta/delta subunits family. MtnA subfamily.

The enzyme catalyses 5-(methylsulfanyl)-alpha-D-ribose 1-phosphate = 5-(methylsulfanyl)-D-ribulose 1-phosphate. The protein operates within amino-acid biosynthesis; L-methionine biosynthesis via salvage pathway; L-methionine from S-methyl-5-thio-alpha-D-ribose 1-phosphate: step 1/6. Functionally, catalyzes the interconversion of methylthioribose-1-phosphate (MTR-1-P) into methylthioribulose-1-phosphate (MTRu-1-P). This is Methylthioribose-1-phosphate isomerase from Klebsiella pneumoniae (strain 342).